The following is a 238-amino-acid chain: Cysteine-rich venom protein pseudechetoxin-like (238 aa).

Residues 1-19 (MIAFLVLLSLAAVLQQSSG) form the signal peptide. The propeptide occupies 20–28 (TVDFASESS). The SCP domain maps to 38–164 (VDKHNDLRRS…STKYLYVCQY (127 aa)). Cystine bridges form between cysteine 75-cysteine 153, cysteine 92-cysteine 165, cysteine 148-cysteine 162, cysteine 184-cysteine 191, cysteine 187-cysteine 196, cysteine 200-cysteine 233, cysteine 209-cysteine 227, and cysteine 218-cysteine 231. Residues 200–233 (CKHNDDLSNCKTLVKKHKCQTEWIKSKCPATCFC) enclose the ShKT domain.

This sequence belongs to the CRISP family. As to expression, expressed by the venom gland.

The protein localises to the secreted. Functionally, blocks olfactory (CNGA2) and retinal (CNGA1) CNG channel currents. Does not affect neither depolarization- nor caffeine-induced contraction of smooth muscle. The sequence is that of Cysteine-rich venom protein pseudechetoxin-like from Pseudonaja textilis (Eastern brown snake).